Here is a 354-residue protein sequence, read N- to C-terminus: uncharacterized protein (354 aa).

The next 9 helical transmembrane spans lie at Met-9–Ser-29, Ile-31–Thr-51, Asn-76–Val-96, Phe-109–Val-129, Ile-144–Ile-164, Gly-185–Val-205, Tyr-278–Tyr-298, Gly-306–Gly-326, and Ile-327–Ile-347.

Its subcellular location is the cell membrane. This is an uncharacterized protein from Methanocaldococcus jannaschii (strain ATCC 43067 / DSM 2661 / JAL-1 / JCM 10045 / NBRC 100440) (Methanococcus jannaschii).